The following is a 415-amino-acid chain: Gamma-glutamyl phosphate reductase (415 aa).

It belongs to the gamma-glutamyl phosphate reductase family.

Its subcellular location is the cytoplasm. It carries out the reaction L-glutamate 5-semialdehyde + phosphate + NADP(+) = L-glutamyl 5-phosphate + NADPH + H(+). It participates in amino-acid biosynthesis; L-proline biosynthesis; L-glutamate 5-semialdehyde from L-glutamate: step 2/2. Its function is as follows. Catalyzes the NADPH-dependent reduction of L-glutamate 5-phosphate into L-glutamate 5-semialdehyde and phosphate. The product spontaneously undergoes cyclization to form 1-pyrroline-5-carboxylate. This chain is Gamma-glutamyl phosphate reductase, found in Psychromonas ingrahamii (strain DSM 17664 / CCUG 51855 / 37).